Consider the following 196-residue polypeptide: Homeobox protein ANF-1 (196 aa).

The homeobox DNA-binding region spans 119–178 (GRRPRTAFTRNQIEVLENVFKMNSYPGIDIREELARKLDLEEDRIQIWFQNRRAKLKRSH).

This sequence belongs to the ANF homeobox family.

It is found in the nucleus. Functionally, may be involved in the early patterning of the most anterior region of the main embryonic body axis. The polypeptide is Homeobox protein ANF-1 (Gallus gallus (Chicken)).